Here is a 448-residue protein sequence, read N- to C-terminus: Cysteine--tRNA ligase (448 aa).

A Zn(2+)-binding site is contributed by cysteine 27. The 'HIGH' region signature appears at 29–39 (PTVYNYIHVGN). Zn(2+) contacts are provided by cysteine 210, histidine 235, and glutamate 239. The short motif at 267–271 (KMSKS) is the 'KMSKS' region element. Lysine 270 lines the ATP pocket.

Belongs to the class-I aminoacyl-tRNA synthetase family. Monomer. Requires Zn(2+) as cofactor.

It localises to the cytoplasm. It catalyses the reaction tRNA(Cys) + L-cysteine + ATP = L-cysteinyl-tRNA(Cys) + AMP + diphosphate. This Lactococcus lactis subsp. cremoris (strain MG1363) protein is Cysteine--tRNA ligase.